Here is a 499-residue protein sequence, read N- to C-terminus: Probable cytosol aminopeptidase (499 aa).

The Mn(2+) site is built by Lys267 and Asp272. The active site involves Lys279. 3 residues coordinate Mn(2+): Asp290, Asp349, and Glu351. Arg353 is a catalytic residue.

Belongs to the peptidase M17 family. Mn(2+) serves as cofactor.

The protein resides in the cytoplasm. The catalysed reaction is Release of an N-terminal amino acid, Xaa-|-Yaa-, in which Xaa is preferably Leu, but may be other amino acids including Pro although not Arg or Lys, and Yaa may be Pro. Amino acid amides and methyl esters are also readily hydrolyzed, but rates on arylamides are exceedingly low.. The enzyme catalyses Release of an N-terminal amino acid, preferentially leucine, but not glutamic or aspartic acids.. Functionally, presumably involved in the processing and regular turnover of intracellular proteins. Catalyzes the removal of unsubstituted N-terminal amino acids from various peptides. The polypeptide is Probable cytosol aminopeptidase (Buchnera aphidicola subsp. Acyrthosiphon pisum (strain 5A)).